We begin with the raw amino-acid sequence, 60 residues long: Chromatin protein Cren7 (60 aa).

Belongs to the Cren7 family. Monomer. Methylated at multiple sites, to varying extents.

The protein localises to the chromosome. Its subcellular location is the cytoplasm. In terms of biological role, a chromatin protein, binds double-stranded DNA without sequence specificity. Constrains negative DNA supercoils. This chain is Chromatin protein Cren7, found in Saccharolobus islandicus (strain M.16.4 / Kamchatka #3) (Sulfolobus islandicus).